A 654-amino-acid chain; its full sequence is 4-hydroxy-3-methylbut-2-en-1-yl diphosphate synthase (flavodoxin) (654 aa).

Cysteine 557, cysteine 560, cysteine 591, and glutamate 598 together coordinate [4Fe-4S] cluster.

Belongs to the IspG family. Requires [4Fe-4S] cluster as cofactor.

The enzyme catalyses (2E)-4-hydroxy-3-methylbut-2-enyl diphosphate + oxidized [flavodoxin] + H2O + 2 H(+) = 2-C-methyl-D-erythritol 2,4-cyclic diphosphate + reduced [flavodoxin]. Its pathway is isoprenoid biosynthesis; isopentenyl diphosphate biosynthesis via DXP pathway; isopentenyl diphosphate from 1-deoxy-D-xylulose 5-phosphate: step 5/6. Functionally, converts 2C-methyl-D-erythritol 2,4-cyclodiphosphate (ME-2,4cPP) into 1-hydroxy-2-methyl-2-(E)-butenyl 4-diphosphate. The polypeptide is 4-hydroxy-3-methylbut-2-en-1-yl diphosphate synthase (flavodoxin) (Protochlamydia amoebophila (strain UWE25)).